The sequence spans 273 residues: MSNQEAIGLIDSGVGGLTVLKEALKQLPNERLIYLGDTARCPYGPRPAEQVVQFTWEMADFLLKKRIKMLVIACNTATAVALEEIKAALPIPVVGVILPGARAAVKVTKNNKIGVIGTLGTIKSASYEIAIKSKAPTIEVTSLDCPKFVPIVESNQYRSSVAKKIVAETLQALQLKGLDTLILGCTHYPLLRPVIQNVMGSHVTLIDSGAETVGEVSMLLDYFDIAHTPEAPTQPHEFYTTGSAKMFEEIASSWLGIENLKAQQIHLGGNEND.

Substrate is bound by residues 11–12 (DS) and 43–44 (YG). Cys74 (proton donor/acceptor) is an active-site residue. 75–76 (NT) provides a ligand contact to substrate. Cys185 (proton donor/acceptor) is an active-site residue. A substrate-binding site is contributed by 186–187 (TH).

The protein belongs to the aspartate/glutamate racemases family. Homodimer.

The enzyme catalyses L-glutamate = D-glutamate. The protein operates within cell wall biogenesis; peptidoglycan biosynthesis. Provides the (R)-glutamate required for cell wall biosynthesis. The polypeptide is Glutamate racemase (Enterococcus faecalis (strain ATCC 700802 / V583)).